Consider the following 209-residue polypeptide: Imidazoleglycerol-phosphate dehydratase (209 aa).

It belongs to the imidazoleglycerol-phosphate dehydratase family.

It localises to the cytoplasm. The enzyme catalyses D-erythro-1-(imidazol-4-yl)glycerol 3-phosphate = 3-(imidazol-4-yl)-2-oxopropyl phosphate + H2O. It functions in the pathway amino-acid biosynthesis; L-histidine biosynthesis; L-histidine from 5-phospho-alpha-D-ribose 1-diphosphate: step 6/9. The polypeptide is Imidazoleglycerol-phosphate dehydratase (Paracidovorax citrulli (strain AAC00-1) (Acidovorax citrulli)).